Consider the following 238-residue polypeptide: 1-(5-phosphoribosyl)-5-[(5-phosphoribosylamino)methylideneamino] imidazole-4-carboxamide isomerase (238 aa).

Asp-8 serves as the catalytic Proton acceptor. Catalysis depends on Asp-129, which acts as the Proton donor.

This sequence belongs to the HisA/HisF family.

The protein localises to the cytoplasm. It carries out the reaction 1-(5-phospho-beta-D-ribosyl)-5-[(5-phospho-beta-D-ribosylamino)methylideneamino]imidazole-4-carboxamide = 5-[(5-phospho-1-deoxy-D-ribulos-1-ylimino)methylamino]-1-(5-phospho-beta-D-ribosyl)imidazole-4-carboxamide. It participates in amino-acid biosynthesis; L-histidine biosynthesis; L-histidine from 5-phospho-alpha-D-ribose 1-diphosphate: step 4/9. The polypeptide is 1-(5-phosphoribosyl)-5-[(5-phosphoribosylamino)methylideneamino] imidazole-4-carboxamide isomerase (Clostridium kluyveri (strain NBRC 12016)).